The sequence spans 26 residues: L-amino-acid oxidase (26 aa).

Belongs to the flavin monoamine oxidase family. In terms of assembly, monomer. The cofactor is FAD. Not glycosylated. As to expression, expressed by the ink gland.

It localises to the secreted. The catalysed reaction is an L-alpha-amino acid + O2 + H2O = a 2-oxocarboxylate + H2O2 + NH4(+). Functionally, catalyzes the oxidative deamination of positively charged L-amino acids L-Lys and L-Arg but not of amino acids L-His, L-Asp or L-Glu. Has antibacterial activity against the Gram-positive bacterium S.aureus (MIC=15 ug/ml). This antibacterial activity is bacteriostatic in the absence of amino acids L-Lys or L-Arg but bactericidal in their presence. The antibacterial effect is largely dependent on H(2)O(2) produced in the oxidative deamination of substrates. Has hemagglutinating activity towards rabbit erythrocytes. Hemagglutinating activity is inhibited by the glycoprotein fetuin, but not by glucose, mannose, galactose, N-acetylglucosamine, N-acetylgalactosamine or sialic acid. This chain is L-amino-acid oxidase, found in Aplysia dactylomela (Spotted sea hare).